A 344-amino-acid chain; its full sequence is Heat-inducible transcription repressor HrcA (344 aa).

It belongs to the HrcA family.

Functionally, negative regulator of class I heat shock genes (grpE-dnaK-dnaJ and groELS operons). Prevents heat-shock induction of these operons. The sequence is that of Heat-inducible transcription repressor HrcA from Streptococcus agalactiae serotype Ia (strain ATCC 27591 / A909 / CDC SS700).